The chain runs to 358 residues: Protein-glutamate methylesterase/protein-glutamine glutaminase 2 (358 aa).

The 118-residue stretch at 7-124 (SVLLVDDSAV…KNFLIESAAE (118 aa)) folds into the Response regulatory domain. 4-aspartylphosphate is present on aspartate 58. Residues 170–358 (AQTTERIVAI…QEIHQAILHR (189 aa)) enclose the CheB-type methylesterase domain. Active-site residues include serine 182, histidine 208, and aspartate 304.

The protein belongs to the CheB family. In terms of processing, phosphorylated by CheA. Phosphorylation of the N-terminal regulatory domain activates the methylesterase activity.

Its subcellular location is the cytoplasm. It catalyses the reaction [protein]-L-glutamate 5-O-methyl ester + H2O = L-glutamyl-[protein] + methanol + H(+). It carries out the reaction L-glutaminyl-[protein] + H2O = L-glutamyl-[protein] + NH4(+). Functionally, involved in chemotaxis. Part of a chemotaxis signal transduction system that modulates chemotaxis in response to various stimuli. Catalyzes the demethylation of specific methylglutamate residues introduced into the chemoreceptors (methyl-accepting chemotaxis proteins or MCP) by CheR. Also mediates the irreversible deamidation of specific glutamine residues to glutamic acid. In Pseudomonas syringae pv. tomato (strain ATCC BAA-871 / DC3000), this protein is Protein-glutamate methylesterase/protein-glutamine glutaminase 2.